Reading from the N-terminus, the 885-residue chain is MTTLSPEAFAGHTPMMQQYLRIKADHPDTLVFYRMGDFYELFFEDAEKAARLLDLTLTQRGASAGTPIKMAGVPHHAVEQYLAKLVKMGESVAICEQIGDPATSKGPVERKVVRVVTPGTLTDAALLSDKNDVYLLAMCTGHNKRGVAVNIGLAWLNLASGALRLAEIEPDQLAAALERIRPAEILTPDGATDAIPAGAGASKRVPAWHFDIASGTQRLCDQLDVASLDGFGAHSLTSACGAAGALLLYAAATQGQQLRHVRSLKVENETEYIGLDPATRRNLELTETLRGTESPTLYSLLDTCCTTMGSRLLRHWLHHPPRASVAAQSRQQAIGALLDAPANASLDALRSALRQIADVERITGRLALLSARPRDLSSLRDTFAALPALRERISAIVANADALARVDAALAPPAECLDLLTSAIAPEPAAMVRDGGVIARGYDAELDELRDISENCGQFLIDLEARERARTGIANLRVEYNKVHGFYIEVTRGQTDKVPDDYRRRQTLKNAERYITPELKTFEDKALSAQERALARERALYDSVLQALLPFIPECQRVASALAELDLLAAFAERARALDWVAPTFTDEIGIEIEQGRHPVVEAQVEQFIANDCRFGTERKLLLITGPNMGGKSTFMRQTALIALMAYVGSYVPAKSACFGPIDRIFTRIGAADDLAGGRSTFMVEMTEAAAILNDATPQSLVLMDEIGRGTSTFDGLALAWAIARHLLAHNACYTLFATHYFELTQLPAEFPQAANVHLSAVEHGHGIVFLHAVNEGPANQSYGLQVAQLAGVPAPVIRAARKHLAYLEQQSASQHTPQLDLFSAPPAAVDDLECADAPALPDTPHPALEKLRDIDPDDLKPREALDLLYELRTLVRSHDADGHA.

626-633 lines the ATP pocket; that stretch reads GPNMGGKS.

It belongs to the DNA mismatch repair MutS family.

This protein is involved in the repair of mismatches in DNA. It is possible that it carries out the mismatch recognition step. This protein has a weak ATPase activity. This chain is DNA mismatch repair protein MutS, found in Burkholderia orbicola (strain MC0-3).